The following is a 606-amino-acid chain: Armadillo repeat-containing X-linked protein 5 (606 aa).

The segment at 1–85 (MIGSKTKRKA…KVKKKKDKTN (85 aa)) is disordered. Over residues 15-26 (GASSKPGTNSPA) the composition is skewed to polar residues. Basic and acidic residues predominate over residues 40 to 59 (VKAEPKEEWGNQAEARDEAV). ARM repeat units follow at residues 349 to 388 (CKSR…GISP), 470 to 509 (VKFD…CLSK), 511 to 551 (QANT…NINF), and 568 to 606 (SELI…ILKL).

The protein belongs to the eutherian X-chromosome-specific Armcx family. Highly expressed in the developing neural tissues, neural crest derivatives and hind limbs.

In Mus musculus (Mouse), this protein is Armadillo repeat-containing X-linked protein 5 (Armcx5).